Reading from the N-terminus, the 279-residue chain is uncharacterized protein (279 aa).

To M.tuberculosis Rv2569c.

This is an uncharacterized protein from Mycobacterium leprae (strain TN).